A 297-amino-acid chain; its full sequence is Tyrosine recombinase XerD (297 aa).

Residues 1-86 (MKDSALIELF…AMRKLFQYLY (86 aa)) enclose the Core-binding (CB) domain. One can recognise a Tyr recombinase domain in the interval 107-291 (RLPKYLTEQQ…AKERLKHLHE (185 aa)). Active-site residues include R147, K171, H243, R246, and H269. Y278 functions as the O-(3'-phospho-DNA)-tyrosine intermediate in the catalytic mechanism.

The protein belongs to the 'phage' integrase family. XerD subfamily. Forms a cyclic heterotetrameric complex composed of two molecules of XerC and two molecules of XerD.

Its subcellular location is the cytoplasm. Functionally, site-specific tyrosine recombinase, which acts by catalyzing the cutting and rejoining of the recombining DNA molecules. The XerC-XerD complex is essential to convert dimers of the bacterial chromosome into monomers to permit their segregation at cell division. It also contributes to the segregational stability of plasmids. The chain is Tyrosine recombinase XerD from Pasteurella multocida (strain Pm70).